A 374-amino-acid chain; its full sequence is 2-aminoethylphosphonate--pyruvate transaminase 1 (374 aa).

At lysine 195 the chain carries N6-(pyridoxal phosphate)lysine.

Belongs to the class-V pyridoxal-phosphate-dependent aminotransferase family. PhnW subfamily. Homodimer. Requires pyridoxal 5'-phosphate as cofactor.

It catalyses the reaction (2-aminoethyl)phosphonate + pyruvate = phosphonoacetaldehyde + L-alanine. In terms of biological role, involved in phosphonate degradation. In Polaromonas sp. (strain JS666 / ATCC BAA-500), this protein is 2-aminoethylphosphonate--pyruvate transaminase 1.